Consider the following 194-residue polypeptide: tRNA (mnm(5)s(2)U34)-methyltransferase (194 aa).

6 residues coordinate S-adenosyl-L-methionine: H33, D34, D52, Q54, S79, and H80.

Belongs to the methyltransferase superfamily. MnmM family. Homodimer.

It carries out the reaction 5-aminomethyl-2-thiouridine(34) in tRNA + S-adenosyl-L-methionine = 5-methylaminomethyl-2-thiouridine(34) in tRNA + S-adenosyl-L-homocysteine + H(+). Its pathway is tRNA modification. Its function is as follows. Involved in the biosynthesis of 5-methylaminomethyl-2-thiouridine (mnm(5)s(2)U) at the wobble position (U34) in tRNA. Catalyzes the transfer of a methyl group from S-adenosyl-L-methionine to nm(5)s(2)U34 to form mnm(5)s(2)U34. This chain is tRNA (mnm(5)s(2)U34)-methyltransferase, found in Bacillus subtilis (strain 168).